We begin with the raw amino-acid sequence, 335 residues long: Ubiquinone biosynthesis protein COQ4, mitochondrial (335 aa).

A mitochondrion-targeting transit peptide spans 1–10 (MLRLSLLRST). Residues His210, Asp211, His214, and Glu226 each coordinate Zn(2+).

It belongs to the COQ4 family. As to quaternary structure, component of a multi-subunit COQ enzyme complex, composed of at least COQ3, COQ4, COQ5, COQ6, COQ7 and COQ9. Interacts with COQ3. Zn(2+) is required as a cofactor.

It is found in the mitochondrion inner membrane. It carries out the reaction 4-hydroxy-3-methoxy-5-(all-trans-hexaprenyl)benzoate + H(+) = 2-methoxy-6-(all-trans-hexaprenyl)phenol + CO2. It functions in the pathway cofactor biosynthesis; ubiquinone biosynthesis. Lyase that catalyzes the C1-decarboxylation of 4-hydroxy-3-methoxy-5-(all-trans-hexaprenyl)benzoic acid into 2-methoxy-6-(all-trans-hexaprenyl)phenol during ubiquinone biosynthesis. This chain is Ubiquinone biosynthesis protein COQ4, mitochondrial, found in Saccharomyces cerevisiae (strain YJM789) (Baker's yeast).